Reading from the N-terminus, the 308-residue chain is Pantothenate synthetase (308 aa).

39-46 (MGALHDGH) provides a ligand contact to ATP. The active-site Proton donor is histidine 46. A (R)-pantoate-binding site is contributed by glutamine 71. Glutamine 71 provides a ligand contact to beta-alanine. Residue 157 to 160 (GEKD) coordinates ATP. (R)-pantoate is bound at residue glutamine 163. ATP-binding positions include valine 186 and 194-197 (MSSR). The segment at 286–308 (IETPAGTAGPDGDRQYAQSPWRN) is disordered.

Belongs to the pantothenate synthetase family. As to quaternary structure, homodimer.

The protein localises to the cytoplasm. The catalysed reaction is (R)-pantoate + beta-alanine + ATP = (R)-pantothenate + AMP + diphosphate + H(+). The protein operates within cofactor biosynthesis; (R)-pantothenate biosynthesis; (R)-pantothenate from (R)-pantoate and beta-alanine: step 1/1. Its function is as follows. Catalyzes the condensation of pantoate with beta-alanine in an ATP-dependent reaction via a pantoyl-adenylate intermediate. The polypeptide is Pantothenate synthetase (Mycobacterium avium (strain 104)).